The sequence spans 413 residues: MVYLQKQDKEVFDAIKLELGRQRANIELIASENFVSEQVMEAMGSVLTNKYAEGYPGKRYYGGCEFVDIVEDLARDRAKKLFGAEYANVQPHSGAQANMAVYHAVLEPGDTVLGMNLSHGGHLTHGSPVNFSGVLYNFVEYGVREDTKEIDYDIVREAALKHKPKMIVAGASAYPRKIDFAKFREIADEVGAYLMVDMAHIAGLVAAGLHQNPVPYADFTTTTTHKTLRGPRGGMILAKAEWEQKLNKSIFPGIQGGPLMHVIAAKAVAFGEALQPEFTTYCEQIIRNSKKLAETLQAHDVTVLTGGSDNHLLLIDLKPLSLTGKAVEKVLDEVGITVNKNTIPFETESPFVTSGIRVGVAAVTTRGFDEVAIEKVGVLISEVLHNIENEEVLADVKARVATLTNEYPLYPSL.

Residues Leu-117 and 121–123 (GHL) each bind (6S)-5,6,7,8-tetrahydrofolate. Lys-226 carries the N6-(pyridoxal phosphate)lysine modification. Position 349 to 351 (349 to 351 (SPF)) interacts with (6S)-5,6,7,8-tetrahydrofolate.

This sequence belongs to the SHMT family. Homodimer. Requires pyridoxal 5'-phosphate as cofactor.

It localises to the cytoplasm. The enzyme catalyses (6R)-5,10-methylene-5,6,7,8-tetrahydrofolate + glycine + H2O = (6S)-5,6,7,8-tetrahydrofolate + L-serine. It functions in the pathway one-carbon metabolism; tetrahydrofolate interconversion. Its pathway is amino-acid biosynthesis; glycine biosynthesis; glycine from L-serine: step 1/1. Functionally, catalyzes the reversible interconversion of serine and glycine with tetrahydrofolate (THF) serving as the one-carbon carrier. This reaction serves as the major source of one-carbon groups required for the biosynthesis of purines, thymidylate, methionine, and other important biomolecules. Also exhibits THF-independent aldolase activity toward beta-hydroxyamino acids, producing glycine and aldehydes, via a retro-aldol mechanism. In Listeria welshimeri serovar 6b (strain ATCC 35897 / DSM 20650 / CCUG 15529 / CIP 8149 / NCTC 11857 / SLCC 5334 / V8), this protein is Serine hydroxymethyltransferase.